A 2603-amino-acid chain; its full sequence is Squalestatin tetraketide synthase (2603 aa).

Positions 29–455 (TIPIAIIGMS…GANAHVILES (427 aa)) constitute a Ketosynthase family 3 (KS3) domain. Residues Cys202, His337, and His377 each act as for beta-ketoacyl synthase activity in the active site. The tract at residues 463–512 (IANGSGRSNGTGNGHNGANGTTNGHNGTNGTTNGHFDATQATNGHYGTDE) is disordered. Gly residues predominate over residues 469 to 479 (RSNGTGNGHNG). Positions 480 to 497 (ANGTTNGHNGTNGTTNGH) are enriched in low complexity. Residues 608-931 (VFTGQGAQWF…PYISCLLRGQ (324 aa)) are malonyl-CoA:ACP transacylase (MAT) domain. The interval 1000–1138 (HDLLGSLIVG…GRITIEFDTS (139 aa)) is N-terminal hotdog fold. Residues 1000-1314 (HDLLGSLIVG…NQSVGQMAPQ (315 aa)) enclose the PKS/mFAS DH domain. Positions 1000–1314 (HDLLGSLIVG…NQSVGQMAPQ (315 aa)) are dehydratase (DH) domain. The active-site Proton acceptor; for dehydratase activity is the His1032. The tract at residues 1157 to 1314 (LMRSVDPSNL…NQSVGQMAPQ (158 aa)) is C-terminal hotdog fold. Asp1223 serves as the catalytic Proton donor; for dehydratase activity. Positions 1465–1665 (LYRYYTDAIK…GLDIELRDCD (201 aa)) are methyltransferase (CMet) domain. An enoyl reductase (ER) (ER) domain region spans residues 1892–2205 (GLIDTLQFSK…AGKHMGKIVI (314 aa)). The segment at 2228–2406 (ASYLIVGGLG…AVSIDLGMVQ (179 aa)) is ketoreductase (KR) domain. In terms of domain architecture, Carrier spans 2516 to 2593 (EAIDVVGRAI…ALATTVATKS (78 aa)). An O-(pantetheine 4'-phosphoryl)serine modification is found at Ser2553.

Its pathway is secondary metabolite biosynthesis. Highly reducing polyketide synthase (HR-PKS); part of the gene cluster that mediates the biosynthesis of squalestatin S1 (SQS1, also known as zaragozic acid A), a lead compound for the treatment of hyper-cholesterolemia by targeting squalene synthase (SS). Pks1 is responsible for the biosynthesis of the tetraketide sidechain of SQS1. The biosynthesis must involve 3 rounds of chain extension. After the first and second rounds methyl-transfer occurs, and in all rounds of extension the ketoreductase and dehydratase are active. The enoyl reductase and C-MeT are not active in the final round of extension. This Phoma sp. (strain C2932) protein is Squalestatin tetraketide synthase.